Reading from the N-terminus, the 68-residue chain is Large ribosomal subunit protein uL29 (68 aa).

Belongs to the universal ribosomal protein uL29 family.

The chain is Large ribosomal subunit protein uL29 (rpl29) from Pyrococcus abyssi (strain GE5 / Orsay).